Reading from the N-terminus, the 479-residue chain is Zinc metalloproteinase/disintegrin PMMP-1 (479 aa).

A signal peptide spans 1-20 (MIQVLLVTICLAVFPYQGSS). Positions 21 to 188 (IILESGNVND…PIKKASKLVV (168 aa)) are excised as a propeptide. One can recognise a Peptidase M12B domain in the interval 194–390 (RYVELVIVAD…HNPQCILNKP (197 aa)). 3 disulfides stabilise this stretch: Cys305-Cys385, Cys345-Cys369, and Cys347-Cys352. His330 provides a ligand contact to Zn(2+). Glu331 is an active-site residue. Zn(2+)-binding residues include His334 and His339. An N-linked (GlcNAc...) asparagine glycan is attached at Asn368. A propeptide spanning residues 391–408 (LRTDTVSTPVSGNELLEA) is cleaved from the precursor. Positions 398–479 (TPVSGNELLE…ADCPRNGLYG (82 aa)) constitute a Disintegrin domain. Intrachain disulfides connect Cys412-Cys427, Cys414-Cys422, Cys421-Cys444, Cys435-Cys441, Cys440-Cys465, and Cys453-Cys472. The Cell attachment site motif lies at 457-459 (RGD).

It belongs to the venom metalloproteinase (M12B) family. P-II subfamily. P-IIa sub-subfamily. In terms of assembly, monomer. It depends on Zn(2+) as a cofactor. In terms of tissue distribution, expressed by the venom gland.

It is found in the secreted. In terms of biological role, impairs hemostasis in the envenomed animal. Functionally, inhibits platelet aggregation. This chain is Zinc metalloproteinase/disintegrin PMMP-1, found in Protobothrops mucrosquamatus (Taiwan habu).